The sequence spans 90 residues: UPF0297 protein BH1268 (90 aa).

The protein belongs to the UPF0297 family.

This is UPF0297 protein BH1268 from Halalkalibacterium halodurans (strain ATCC BAA-125 / DSM 18197 / FERM 7344 / JCM 9153 / C-125) (Bacillus halodurans).